Consider the following 457-residue polypeptide: Forkhead box protein N3 (457 aa).

The segment at methionine 1–glutamine 24 is disordered. Residues serine 13–serine 23 show a composition bias toward low complexity. Phosphoserine occurs at positions 83, 85, and 97. The interval proline 86–glutamine 109 is disordered. The segment at residues lysine 114–proline 210 is a DNA-binding region (fork-head). The tract at residues arginine 285 to glutamate 422 is disordered. 2 stretches are compositionally biased toward low complexity: residues serine 308–serine 331 and glycine 342–serine 353. Positions histidine 354–leucine 376 are enriched in basic and acidic residues. Residues glutamine 384–lysine 396 show a composition bias toward basic residues. Residue serine 415 is modified to Phosphoserine.

Interacts through its C-terminus with the C-terminus of SNW1/SKIP.

The protein localises to the nucleus. In terms of biological role, acts as a transcriptional repressor. May be involved in DNA damage-inducible cell cycle arrests (checkpoints). The sequence is that of Forkhead box protein N3 (Foxn3) from Mus musculus (Mouse).